The sequence spans 357 residues: Protein RecA (357 aa).

67–74 serves as a coordination point for ATP; that stretch reads GPESSGKT. The tract at residues 332-357 is disordered; sequence PSAMSSSSSDDENSEGNVDFETGEVF.

Belongs to the RecA family.

It is found in the cytoplasm. In terms of biological role, can catalyze the hydrolysis of ATP in the presence of single-stranded DNA, the ATP-dependent uptake of single-stranded DNA by duplex DNA, and the ATP-dependent hybridization of homologous single-stranded DNAs. It interacts with LexA causing its activation and leading to its autocatalytic cleavage. In Shewanella sp. (strain ANA-3), this protein is Protein RecA.